A 311-amino-acid polypeptide reads, in one-letter code: R2-like ligand binding oxidase (311 aa).

Residues E68, E101, and H104 each coordinate Mn(2+). The 3-(O4'-tyrosyl)-valine (Val-Tyr) cross-link spans V71–Y162. Residue E101 participates in Fe cation binding. E167, E202, and H205 together coordinate Fe cation.

It belongs to the ribonucleoside diphosphate reductase small chain family. R2-like ligand binding oxidase subfamily. Homodimer. The cofactor is Fe cation. Mn(2+) serves as cofactor.

In terms of biological role, probable oxidase that might be involved in lipid metabolism. In Mycolicibacterium paratuberculosis (strain ATCC BAA-968 / K-10) (Mycobacterium paratuberculosis), this protein is R2-like ligand binding oxidase.